Consider the following 304-residue polypeptide: Porphobilinogen deaminase (304 aa).

C240 is subject to S-(dipyrrolylmethanemethyl)cysteine.

The protein belongs to the HMBS family. As to quaternary structure, monomer. Dipyrromethane is required as a cofactor.

It catalyses the reaction 4 porphobilinogen + H2O = hydroxymethylbilane + 4 NH4(+). The protein operates within porphyrin-containing compound metabolism; protoporphyrin-IX biosynthesis; coproporphyrinogen-III from 5-aminolevulinate: step 2/4. In terms of biological role, tetrapolymerization of the monopyrrole PBG into the hydroxymethylbilane pre-uroporphyrinogen in several discrete steps. The sequence is that of Porphobilinogen deaminase from Xanthomonas oryzae pv. oryzae (strain KACC10331 / KXO85).